The primary structure comprises 381 residues: Cytochrome b (381 aa).

4 consecutive transmembrane segments (helical) span residues 34–54 (FGSL…FLAM), 78–99 (WLMR…YLHI), 114–134 (WNIG…GYVL), and 179–199 (FFAF…IHIL). 2 residues coordinate heme b: histidine 84 and histidine 98. Histidine 183 and histidine 197 together coordinate heme b. Histidine 202 provides a ligand contact to a ubiquinone. Helical transmembrane passes span 227-247 (YKDL…ALFM), 289-309 (LGGV…PLLH), 321-341 (LTQI…WIGG), and 348-368 (FIMV…FVIP).

The protein belongs to the cytochrome b family. As to quaternary structure, the cytochrome bc1 complex contains 3 respiratory subunits (MT-CYB, CYC1 and UQCRFS1), 2 core proteins (UQCRC1 and UQCRC2) and probably 6 low-molecular weight proteins. The cofactor is heme b.

It localises to the mitochondrion inner membrane. Its function is as follows. Component of the ubiquinol-cytochrome c reductase complex (complex III or cytochrome b-c1 complex) that is part of the mitochondrial respiratory chain. The b-c1 complex mediates electron transfer from ubiquinol to cytochrome c. Contributes to the generation of a proton gradient across the mitochondrial membrane that is then used for ATP synthesis. This Scyliorhinus canicula (Small-spotted catshark) protein is Cytochrome b (mt-cyb).